The following is a 262-amino-acid chain: Granzyme A (262 aa).

The N-terminal stretch at 1–26 is a signal peptide; sequence MRNSYRFLASSLSVVVSLLLIPEDVC. Positions 27–28 are cleaved as a propeptide — activation peptide; it reads EK. Residues 29–259 enclose the Peptidase S1 domain; sequence IIGGNEVTPH…HLNWIIMTIK (231 aa). An intrachain disulfide couples C54 to C70. Residues H69 and D114 each act as charge relay system in the active site. 3 disulfides stabilise this stretch: C148–C218, C179–C197, and C208–C234. Residue N170 is glycosylated (N-linked (GlcNAc...) asparagine). The Charge relay system role is filled by S212.

It belongs to the peptidase S1 family. Granzyme subfamily. In terms of assembly, homodimer; disulfide-linked. Interacts with APEX1.

The protein resides in the secreted. It localises to the cytoplasmic granule. It carries out the reaction Hydrolysis of proteins, including fibronectin, type IV collagen and nucleolin. Preferential cleavage: -Arg-|-Xaa-, -Lys-|-Xaa- &gt;&gt; -Phe-|-Xaa- in small molecule substrates.. Its function is as follows. Abundant protease in the cytosolic granules of cytotoxic T-cells and NK-cells which activates caspase-independent pyroptosis when delivered into the target cell through the immunological synapse. It cleaves after Lys or Arg. Once delivered into the target cell, acts by catalyzing cleavage of gasdermin-B (GSDMB), releasing the pore-forming moiety of GSDMB, thereby triggering pyroptosis and target cell death. Cleaves APEX1 after 'Lys-31' and destroys its oxidative repair activity. Cleaves the nucleosome assembly protein SET after 'Lys-189', which disrupts its nucleosome assembly activity and allows the SET complex to translocate into the nucleus to nick and degrade the DNA. The polypeptide is Granzyme A (Homo sapiens (Human)).